Here is a 396-residue protein sequence, read N- to C-terminus: MSRLARLREQLSTRDHFCDGWLLVATLSLMLIGWVMVTSASTEVATSLTGNPWYFSVRHGVFVLCSMVVALLVLRIPMAWWKANGPLLLLVGLALLALVLVAGREVNGSRRWLSVPGIPLNLQASEIAKLCLIVYLAGYLERFLPQVRRHWGAFLRPLMVMAVMGVLLIFEPDYGAVVVMTGCVMGMLLMAGAPWGRFLLLMGLVAALGAALAIAEPYRMARLTSFVDPWADQFASGYQLTQALIAFGRGEWFGTGLGNSVQKLFYLPEAHTDFVFAVLAEELGMIGAVAVIGLFALLVWRAMAVGRRAELAKRPFAAYLCYGIALVIGAQAFINIAVSTGMLPTKGLTLPLLSYGGSSLVISAVMVGMLLRVDIETRQARRREQPAAPRTGEARS.

9 helical membrane passes run 17–37, 61–81, 83–103, 117–137, 159–179, 198–218, 274–294, 316–336, and 350–370; these read FCDG…WVMV, VFVL…MAWW, ANGP…LVAG, GIPL…VYLA, MVMA…AVVV, FLLL…AEPY, FVFA…VIGL, FAAY…FINI, and LPLL…VGML.

It belongs to the SEDS family. FtsW subfamily.

The protein resides in the cell inner membrane. It catalyses the reaction [GlcNAc-(1-&gt;4)-Mur2Ac(oyl-L-Ala-gamma-D-Glu-L-Lys-D-Ala-D-Ala)](n)-di-trans,octa-cis-undecaprenyl diphosphate + beta-D-GlcNAc-(1-&gt;4)-Mur2Ac(oyl-L-Ala-gamma-D-Glu-L-Lys-D-Ala-D-Ala)-di-trans,octa-cis-undecaprenyl diphosphate = [GlcNAc-(1-&gt;4)-Mur2Ac(oyl-L-Ala-gamma-D-Glu-L-Lys-D-Ala-D-Ala)](n+1)-di-trans,octa-cis-undecaprenyl diphosphate + di-trans,octa-cis-undecaprenyl diphosphate + H(+). Its pathway is cell wall biogenesis; peptidoglycan biosynthesis. Functionally, peptidoglycan polymerase that is essential for cell division. In Halomonas elongata (strain ATCC 33173 / DSM 2581 / NBRC 15536 / NCIMB 2198 / 1H9), this protein is Probable peptidoglycan glycosyltransferase FtsW.